The chain runs to 382 residues: MDFGALPPEVNSARMYGGAGAADLLAAAAAWNGIAVEVSTAASSVGSVITRLSTEHWMGPASLSMAAAVQPYLVWLTCTAESSALAAAQAMASAAAFETAFALTVPPAEVVANRALLAELTATNILGQNVSAIAATEARYGEMWAQDASAMYGYAAASAVAARLNPLTRPSHITNPAGLAHQAAAVGQAGASAFARQVGLSHLISDVADAVLSFASPVMSAADTGLEAVRQFLNLDVPLFVESAFHGLGGVADFATAAIGNMTLLADAMGTVGGAAPGGGAAAAVAHAVAPAGVGGTALTADLGNASVVGRLSVPASWSTAAPATAAGAALDGTGWAVPEEDGPIAVMPPAPGMVVAANSVGADSGPRYGVKPIVMPKHGLF.

This sequence belongs to the mycobacterial PPE family.

It is found in the secreted. Its subcellular location is the cell wall. The protein resides in the cell surface. Virulence factor that modulates host innate immune response. The protein is PPE family protein PPE44 of Mycobacterium tuberculosis (strain CDC 1551 / Oshkosh).